The chain runs to 100 residues: Large ribosomal subunit protein uL23 (100 aa).

This sequence belongs to the universal ribosomal protein uL23 family. As to quaternary structure, part of the 50S ribosomal subunit. Contacts protein L29, and trigger factor when it is bound to the ribosome.

In terms of biological role, one of the early assembly proteins it binds 23S rRNA. One of the proteins that surrounds the polypeptide exit tunnel on the outside of the ribosome. Forms the main docking site for trigger factor binding to the ribosome. This Pasteurella multocida (strain Pm70) protein is Large ribosomal subunit protein uL23.